The primary structure comprises 320 residues: MQMKMMFFCLSDWQSNQQMHGKMAPLKSHVPCTEKPGKVQEPPDDGSLHWSEGSKGEDIKKYSREGTLRSKYNQQYHKLFKDIPLEEVVLKVCSCALQRDLLLHGRLYISPNWLCFHASLFGKDIKVVIPVVSVQLIKKHKMARLLPNGLAITTNTSQKYVFVSLLSRDSVYDMLRRVCTHLQPSSKKSLSIRKFPEEAECESPEVLIPEMKWRKACSAPASLSLPDSISCISQIPTDSTDSCFPSRKPPGSEAVCEKDALEEEPSTDQELRLWDSRLLKVIFVMICFLVLSSSYLAFRISRLEQQLCSLSWGSPLPRDR.

Positions 33 to 56 (TEKPGKVQEPPDDGSLHWSEGSKG) are disordered. Positions 74-141 (QQYHKLFKDI…VSVQLIKKHK (68 aa)) constitute a GRAM domain. The chain crosses the membrane as a helical span at residues 278-298 (LLKVIFVMICFLVLSSSYLAF).

Phosphorylated.

The protein resides in the endoplasmic reticulum membrane. It is found in the cell membrane. Functionally, participates in the organization ofendoplasmic reticulum-plasma membrane contact sites (EPCS) with pleiotropic functions including STIM1 recruitment and calcium homeostasis. Constitutive tether that co-localize with ESYT2/3 tethers at endoplasmic reticulum-plasma membrane contact sites in a phosphatidylinositol lipid-dependent manner. Pre-marks the subset of phosphtidylinositol 4,5-biphosphate (PI(4,5)P2)-enriched EPCS destined for the store operated calcium entry pathway (SOCE). This is GRAM domain-containing protein 2A from Mus musculus (Mouse).